Consider the following 101-residue polypeptide: NAD(P)H-quinone oxidoreductase subunit 4L, chloroplastic (101 aa).

Transmembrane regions (helical) follow at residues 2-22 (MLEHVLVLSAYLFSVGLYGLI), 32-52 (MCLELILNAVNINFVTFSDFF), and 61-81 (IFSIFVIAIAAAEAAIGLAIV).

Belongs to the complex I subunit 4L family. NDH is composed of at least 16 different subunits, 5 of which are encoded in the nucleus.

Its subcellular location is the plastid. The protein resides in the chloroplast thylakoid membrane. It catalyses the reaction a plastoquinone + NADH + (n+1) H(+)(in) = a plastoquinol + NAD(+) + n H(+)(out). It carries out the reaction a plastoquinone + NADPH + (n+1) H(+)(in) = a plastoquinol + NADP(+) + n H(+)(out). Its function is as follows. NDH shuttles electrons from NAD(P)H:plastoquinone, via FMN and iron-sulfur (Fe-S) centers, to quinones in the photosynthetic chain and possibly in a chloroplast respiratory chain. The immediate electron acceptor for the enzyme in this species is believed to be plastoquinone. Couples the redox reaction to proton translocation, and thus conserves the redox energy in a proton gradient. The polypeptide is NAD(P)H-quinone oxidoreductase subunit 4L, chloroplastic (Daucus carota (Wild carrot)).